The chain runs to 387 residues: Beta-citrylglutamate synthase B (387 aa).

One can recognise an ATP-grasp domain in the interval 119 to 304 (FQELAGHGVP…VAGIIADYAA (186 aa)). Residues Lys-158, 193–203 (QKYIKESHGRD), and Arg-219 each bind ATP. 3 residues coordinate Mg(2+): Asp-264, Glu-277, and Asn-279. Mn(2+) is bound by residues Asp-264, Glu-277, and Asn-279. The interval 325 to 361 (ASETSEPELGPPASAAVDNMSASSSSVDSDPESTTER) is disordered. The segment covering 337–352 (ASAAVDNMSASSSSVD) has biased composition (low complexity).

It belongs to the RimK family. Mg(2+) is required as a cofactor. Requires Mn(2+) as cofactor. Strongly expressed in brain and testis. Expressed in eyes, thymus, lung, kidney, skeletal muscle, spleen, skin and heart. Expressed in neurons of the neocortex, the gray matter and Purkinje cells.

It is found in the cytoplasm. The catalysed reaction is citrate + L-glutamate + ATP = beta-citrylglutamate + ADP + phosphate + H(+). It carries out the reaction N-acetyl-L-aspartate + L-glutamate + ATP = N-acetyl-L-aspartyl-L-glutamate + ADP + phosphate + H(+). In terms of biological role, catalyzes the synthesis of beta-citryl-L-glutamate and N-acetyl-L-aspartyl-L-glutamate. Beta-citryl-L-glutamate is synthesized more efficiently than N-acetyl-L-aspartyl-L-glutamate. This Mus musculus (Mouse) protein is Beta-citrylglutamate synthase B (Rimklb).